We begin with the raw amino-acid sequence, 88 residues long: Secretion system apparatus protein SsaS (88 aa).

Transmembrane regions (helical) follow at residues 15–35 and 55–75; these read WIVLFTSMPVVLVASVVGVIV and LLAIAITLMVSYPWLSGILLN.

This sequence belongs to the FliQ/MopD/SpaQ family.

It is found in the cell membrane. Its function is as follows. Part of a type III secretion system. This chain is Secretion system apparatus protein SsaS (ssaS), found in Salmonella typhimurium (strain LT2 / SGSC1412 / ATCC 700720).